Consider the following 258-residue polypeptide: UPF0328 protein ECU07_0060 (258 aa).

The protein belongs to the UPF0328 family.

This chain is UPF0328 protein ECU07_0060, found in Encephalitozoon cuniculi (strain GB-M1) (Microsporidian parasite).